Reading from the N-terminus, the 713-residue chain is Polyribonucleotide nucleotidyltransferase (713 aa).

Residues Asp-487 and Asp-493 each coordinate Mg(2+). A KH domain is found at Pro-554–Ile-613. The S1 motif domain maps to Gly-623–Lys-691.

Belongs to the polyribonucleotide nucleotidyltransferase family. Mg(2+) serves as cofactor.

The protein localises to the cytoplasm. The catalysed reaction is RNA(n+1) + phosphate = RNA(n) + a ribonucleoside 5'-diphosphate. In terms of biological role, involved in mRNA degradation. Catalyzes the phosphorolysis of single-stranded polyribonucleotides processively in the 3'- to 5'-direction. This chain is Polyribonucleotide nucleotidyltransferase, found in Agrobacterium fabrum (strain C58 / ATCC 33970) (Agrobacterium tumefaciens (strain C58)).